The primary structure comprises 652 residues: Regulator of DNA class I crossover intermediates 1 (652 aa).

Residues 1 to 228 (MNWVGGSRSR…APYKRTNSSE (228 aa)) constitute a DNA-binding region (binds DNA containing a D-loop). Disordered stretches follow at residues 464 to 512 (YLES…KATE) and 621 to 652 (EKES…SNSL). A compositionally biased stretch (low complexity) spans 467-477 (SSQSSQSASYS). Polar residues-rich tracts occupy residues 478-491 (PRPT…STDL) and 639-652 (DTTG…SNSL).

In terms of assembly, interacts with MSH5. Interacts with TEX11. As to expression, expressed mainly in testis (at protein level). Expressed in spermatogonia and enriched in spermatocytes; absent in testicular somatic cells (at protein level). No expression or low levels in other tissues.

It localises to the chromosome. Functionally, involved in recombination, probably acting by stabilizing recombination intermediates during meiotic crossover formation. Required for normal germline development and fertility. Required for meiotic progression, complete chromosomal synapsis and crossover formation. Binds double-stranded DNA. However, also binds branched DNA molecules, such as those containing a D-loop or Holliday junction structure. Probably not required for formation of DNA double-strand breaks (DSBs). Also binds RNA in an RNA structure-independent manner, with a preference for binding 3'-UTR regions of mRNAs; may stabilize bound RNAs. The chain is Regulator of DNA class I crossover intermediates 1 from Mus musculus (Mouse).